Here is an 888-residue protein sequence, read N- to C-terminus: Bifunctional lysine-specific demethylase and histidyl-hydroxylase NO66 (888 aa).

Disordered regions lie at residues 83-157, 187-208, and 261-446; these read AAAK…GSFS, SNNS…DSDA, and NSTS…NKLS. Over residues 98–108 the composition is skewed to basic and acidic residues; the sequence is REKNIAKKQPE. Over residues 116–139 the composition is skewed to polar residues; sequence ENVQKQLENGQENNGTLINLSNGK. Acidic residues predominate over residues 192–207; it reads FDFDSDGDSNDFDDSD. Over residues 273-284 the composition is skewed to basic and acidic residues; it reads VEPRKAAKRNEP. A compositionally biased stretch (low complexity) spans 392–403; sequence KNKNNDNNNIDT. Positions 404–429 are enriched in basic and acidic residues; the sequence is NNKKDANNKKDANNNKDINNKKDANN. Residues 430 to 444 show a composition bias toward low complexity; the sequence is NKDTNNNKDNNNKNK. Residues 564–709 enclose the JmjC domain; the sequence is CSIRILNPST…NLLEVLMPSV (146 aa). Fe cation-binding residues include H610, D612, and H675.

The protein belongs to the ROX family. NO66 subfamily. Fe(2+) is required as a cofactor.

Its subcellular location is the nucleus. The enzyme catalyses N(6),N(6)-dimethyl-L-lysyl(36)-[histone H3] + 2 2-oxoglutarate + 2 O2 = L-lysyl(36)-[histone H3] + 2 formaldehyde + 2 succinate + 2 CO2. Its function is as follows. Oxygenase that can act as both a histone lysine demethylase and a ribosomal histidine hydroxylase. Specifically demethylates 'Lys-4' (H3K4me) and 'Lys-36' (H3K36me) of histone H3, thereby playing a central role in histone code. The protein is Bifunctional lysine-specific demethylase and histidyl-hydroxylase NO66 of Drosophila mojavensis (Fruit fly).